Reading from the N-terminus, the 237-residue chain is Lectin alpha chain (237 aa).

The Mn(2+) site is built by Glu-8 and Asp-10. Ca(2+) contacts are provided by Asp-10, Tyr-12, Asn-14, and Asp-19. Tyr-12 contacts a carbohydrate. 3 residues coordinate Mn(2+): Asp-19, His-24, and Ser-34. 99 to 100 (LY) contributes to the a carbohydrate binding site. Asp-208 is a Ca(2+) binding site. Arg-228 is a binding site for a carbohydrate.

The protein belongs to the leguminous lectin family. In terms of assembly, homotetramer. In terms of processing, the beta and gamma chains are produced by partial proteolytic processing of the lectin alpha chain by an asparaginyl endopeptidase. Mixture of 60% alpha lectin and 40% of its beta and gamma proteolytic fragments.

In terms of biological role, D-mannose/D-glucose-binding lectin. Has anti-inflammatory activity in rats. Induces histamine release in mast cells from rat. Induces lymphocyte proliferation and IFNG production. Shows toxicity against the aquatic snail B.glabrata at concentrations higher than 50 ug/ml. In Dioclea grandiflora (Mucana), this protein is Lectin alpha chain.